A 480-amino-acid polypeptide reads, in one-letter code: UDP-N-acetylmuramoylalanine--D-glutamate ligase (480 aa).

120-126 (GTNGKTT) is a binding site for ATP.

This sequence belongs to the MurCDEF family.

Its subcellular location is the cytoplasm. It carries out the reaction UDP-N-acetyl-alpha-D-muramoyl-L-alanine + D-glutamate + ATP = UDP-N-acetyl-alpha-D-muramoyl-L-alanyl-D-glutamate + ADP + phosphate + H(+). It participates in cell wall biogenesis; peptidoglycan biosynthesis. Its function is as follows. Cell wall formation. Catalyzes the addition of glutamate to the nucleotide precursor UDP-N-acetylmuramoyl-L-alanine (UMA). The chain is UDP-N-acetylmuramoylalanine--D-glutamate ligase from Nocardia farcinica (strain IFM 10152).